Reading from the N-terminus, the 327-residue chain is Aldo/keto reductase slr0942 (327 aa).

An NADP(+)-binding site is contributed by 18-27 (GEQIPALGLG). Tyr57 (proton donor) is an active-site residue. A substrate-binding site is contributed by His119. Residue 216-280 (SPLGSGDRPA…SVNPERLEQN (65 aa)) coordinates NADP(+).

The protein belongs to the aldo/keto reductase family. In terms of assembly, monomer.

It carries out the reaction a secondary alcohol + NADP(+) = a ketone + NADPH + H(+). Its activity is regulated as follows. Curcumin non-competitively inhibits the enzyme with respect to furfural. To a lesser extent, enzyme activity is also inhibited by indomethacin, coumarate, coumarin, and alrestatin. Aldo/keto reductase with broad substrate spectrum. Catalyzes the NADPH-dependent reduction of aldehyde- and ketone-groups of different classes of carbonyl compounds to the corresponding alcohols. Highest enzymatic efficiency is observed with 4-oxonon-2-enal (4-ONE) and 4-hydroxynon-2-enal (4-HNE), that are lipid peroxidation products, and 9,10-phenanthrenequinone (9,10-PQ), a photoproduct of phenanthrene that is one of the most prevalent polycyclic aromatic hydrocarbons in the environment. Is also active on sugar-derived reactive carbonyls such as methylglyoxal (MG), glyoxal and 3-deoxyglucosone (3-DG), and on other lipid-derived carbonyls such as acrolein. May be involved in the detoxification of the toxic lipid peroxidation products 4-ONE and 4-HNE besides many other exo- and endogenic reactive carbonyl compounds (RCs) that may lead to photoinhibition or other cell damages. The sequence is that of Aldo/keto reductase slr0942 from Synechocystis sp. (strain ATCC 27184 / PCC 6803 / Kazusa).